We begin with the raw amino-acid sequence, 489 residues long: Probable cytosol aminopeptidase (489 aa).

2 residues coordinate Mn(2+): K254 and D259. K266 is a catalytic residue. Residues D277, D336, and E338 each contribute to the Mn(2+) site. R340 is a catalytic residue.

It belongs to the peptidase M17 family. It depends on Mn(2+) as a cofactor.

The protein resides in the cytoplasm. It carries out the reaction Release of an N-terminal amino acid, Xaa-|-Yaa-, in which Xaa is preferably Leu, but may be other amino acids including Pro although not Arg or Lys, and Yaa may be Pro. Amino acid amides and methyl esters are also readily hydrolyzed, but rates on arylamides are exceedingly low.. The catalysed reaction is Release of an N-terminal amino acid, preferentially leucine, but not glutamic or aspartic acids.. Presumably involved in the processing and regular turnover of intracellular proteins. Catalyzes the removal of unsubstituted N-terminal amino acids from various peptides. In Cereibacter sphaeroides (strain ATCC 17025 / ATH 2.4.3) (Rhodobacter sphaeroides), this protein is Probable cytosol aminopeptidase.